A 374-amino-acid chain; its full sequence is Patatin-2-Kuras 1 (374 aa).

The first 11 residues, 1 to 11 (MILATTGSTCA), serve as a signal peptide directing secretion. One can recognise a PNPLA domain in the interval 20-217 (LSIDGGGIKG…TVGDPALLSL (198 aa)). The GXGXXG signature appears at 24–29 (GGGIKG). A GXSXG motif is present at residues 63–67 (GTSTG). Residue serine 65 is the Nucleophile of the active site. N-linked (GlcNAc...) asparagine glycosylation is present at asparagine 103. Aspartate 203 acts as the Proton acceptor in catalysis. The short motif at 203–205 (DGA) is the DGA/G element. The stretch at 309–372 (ENALTGTTTE…DRKKLRANKA (64 aa)) forms a coiled coil.

Belongs to the patatin family. As to expression, tuber.

It localises to the vacuole. Functionally, probable lipolytic acyl hydrolase (LAH), an activity which is thought to be involved in the response of tubers to pathogens. The sequence is that of Patatin-2-Kuras 1 (pat2-k1) from Solanum tuberosum (Potato).